A 208-amino-acid polypeptide reads, in one-letter code: MKAIFITLEGPDGSGKTTVGTLLNQKMEEAGIDFIKTREPGGSPISEKVRNIVLGIGNEEMDPKTEVLLIAGARRQHVVETIRPALAAGKTVLCDRFMDSSLAYQGAGRDMDMEQVLQVNLYAIEDTIPDRTYYLDVPAEVGLARIAANKGREVNRLDKEDISYHEKVQAGYEKIIKMFPDRFMRVDATMQPEEITEVILADILQQLS.

10–17 is an ATP binding site; that stretch reads GPDGSGKT.

This sequence belongs to the thymidylate kinase family.

The enzyme catalyses dTMP + ATP = dTDP + ADP. Functionally, phosphorylation of dTMP to form dTDP in both de novo and salvage pathways of dTTP synthesis. The polypeptide is Thymidylate kinase (Listeria welshimeri serovar 6b (strain ATCC 35897 / DSM 20650 / CCUG 15529 / CIP 8149 / NCTC 11857 / SLCC 5334 / V8)).